The primary structure comprises 180 residues: Pro-glucagon (180 aa).

The N-terminal stretch at 1 to 20 is a signal peptide; the sequence is MKTIYFVAGLLIMLVQGSWQ. A disordered region spans residues 25 to 58; sequence DTEENPRSFPASQTEAHEDPDEMNEDKRHSQGTF. Serine 54 is subject to Phosphoserine. The propeptide occupies 84–89; that stretch reads NRNNIA. 2 positions are modified to phosphoserine: serine 105 and serine 108. Arginine 127 bears the Arginine amide mark. Positions 131-145 are excised as a propeptide; the sequence is DFPEEVAIAEELGRR. 2 positions are modified to phosphoserine: serine 150 and serine 152.

The protein belongs to the glucagon family. Post-translationally, proglucagon is post-translationally processed in a tissue-specific manner in pancreatic A cells and intestinal L cells. In pancreatic A cells, the major bioactive hormone is glucagon cleaved by PCSK2/PC2. In the intestinal L cells PCSK1/PC1 liberates GLP-1, GLP-2, glicentin and oxyntomodulin. GLP-1 is further N-terminally truncated by post-translational processing in the intestinal L cells resulting in GLP-1(7-37) GLP-1-(7-36)amide. The C-terminal amidation is neither important for the metabolism of GLP-1 nor for its effects on the endocrine pancreas. As to expression, secreted in the A cells of the islets of Langerhans. Secreted in the A cells of the islets of Langerhans. Secreted from enteroendocrine L cells throughout the gastrointestinal tract. Also secreted in selected neurons in the brain. In terms of tissue distribution, secreted from enteroendocrine cells throughout the gastrointestinal tract. Also secreted in selected neurons in the brain. As to expression, secreted from enteroendocrine cells throughout the gastrointestinal tract.

It is found in the secreted. In terms of biological role, plays a key role in glucose metabolism and homeostasis. Regulates blood glucose by increasing gluconeogenesis and decreasing glycolysis. A counterregulatory hormone of insulin, raises plasma glucose levels in response to insulin-induced hypoglycemia. Plays an important role in initiating and maintaining hyperglycemic conditions in diabetes. Potent stimulator of glucose-dependent insulin release. Also stimulates insulin release in response to IL6. Plays important roles on gastric motility and the suppression of plasma glucagon levels. May be involved in the suppression of satiety and stimulation of glucose disposal in peripheral tissues, independent of the actions of insulin. Has growth-promoting activities on intestinal epithelium. May also regulate the hypothalamic pituitary axis (HPA) via effects on LH, TSH, CRH, oxytocin, and vasopressin secretion. Increases islet mass through stimulation of islet neogenesis and pancreatic beta cell proliferation. Inhibits beta cell apoptosis. Functionally, stimulates intestinal growth and up-regulates villus height in the small intestine, concomitant with increased crypt cell proliferation and decreased enterocyte apoptosis. The gastrointestinal tract, from the stomach to the colon is the principal target for GLP-2 action. Plays a key role in nutrient homeostasis, enhancing nutrient assimilation through enhanced gastrointestinal function, as well as increasing nutrient disposal. Stimulates intestinal glucose transport and decreases mucosal permeability. Its function is as follows. Significantly reduces food intake. Inhibits gastric emptying in humans. Suppression of gastric emptying may lead to increased gastric distension, which may contribute to satiety by causing a sensation of fullness. In terms of biological role, may modulate gastric acid secretion and the gastro-pyloro-duodenal activity. May play an important role in intestinal mucosal growth in the early period of life. This is Pro-glucagon (Gcg) from Mus musculus (Mouse).